We begin with the raw amino-acid sequence, 421 residues long: 4-hydroxy-3-methylbut-2-en-1-yl diphosphate synthase (flavodoxin) (421 aa).

A disordered region spans residues 1 to 20 (MHDAVTRPTPPSDATSWPRR). [4Fe-4S] cluster contacts are provided by Cys-311, Cys-314, Cys-357, and Glu-364.

The protein belongs to the IspG family. The cofactor is [4Fe-4S] cluster.

The enzyme catalyses (2E)-4-hydroxy-3-methylbut-2-enyl diphosphate + oxidized [flavodoxin] + H2O + 2 H(+) = 2-C-methyl-D-erythritol 2,4-cyclic diphosphate + reduced [flavodoxin]. Its pathway is isoprenoid biosynthesis; isopentenyl diphosphate biosynthesis via DXP pathway; isopentenyl diphosphate from 1-deoxy-D-xylulose 5-phosphate: step 5/6. Its function is as follows. Converts 2C-methyl-D-erythritol 2,4-cyclodiphosphate (ME-2,4cPP) into 1-hydroxy-2-methyl-2-(E)-butenyl 4-diphosphate. This chain is 4-hydroxy-3-methylbut-2-en-1-yl diphosphate synthase (flavodoxin), found in Stenotrophomonas maltophilia (strain R551-3).